A 364-amino-acid polypeptide reads, in one-letter code: UDP-N-acetylglucosamine--N-acetylmuramyl-(pentapeptide) pyrophosphoryl-undecaprenol N-acetylglucosamine transferase (364 aa).

Residues 10–12, asparagine 126, arginine 167, serine 199, isoleucine 253, and glutamine 298 contribute to the UDP-N-acetyl-alpha-D-glucosamine site; that span reads TGG.

This sequence belongs to the glycosyltransferase 28 family. MurG subfamily.

It is found in the cell inner membrane. It carries out the reaction di-trans,octa-cis-undecaprenyl diphospho-N-acetyl-alpha-D-muramoyl-L-alanyl-D-glutamyl-meso-2,6-diaminopimeloyl-D-alanyl-D-alanine + UDP-N-acetyl-alpha-D-glucosamine = di-trans,octa-cis-undecaprenyl diphospho-[N-acetyl-alpha-D-glucosaminyl-(1-&gt;4)]-N-acetyl-alpha-D-muramoyl-L-alanyl-D-glutamyl-meso-2,6-diaminopimeloyl-D-alanyl-D-alanine + UDP + H(+). It participates in cell wall biogenesis; peptidoglycan biosynthesis. Functionally, cell wall formation. Catalyzes the transfer of a GlcNAc subunit on undecaprenyl-pyrophosphoryl-MurNAc-pentapeptide (lipid intermediate I) to form undecaprenyl-pyrophosphoryl-MurNAc-(pentapeptide)GlcNAc (lipid intermediate II). In Amoebophilus asiaticus (strain 5a2), this protein is UDP-N-acetylglucosamine--N-acetylmuramyl-(pentapeptide) pyrophosphoryl-undecaprenol N-acetylglucosamine transferase.